The chain runs to 622 residues: Probable Xaa-Pro aminopeptidase P (622 aa).

Residues Asp-419, Asp-430, Glu-528, and Glu-542 each coordinate Mn(2+).

The protein belongs to the peptidase M24B family. It depends on Mn(2+) as a cofactor.

It catalyses the reaction Release of any N-terminal amino acid, including proline, that is linked to proline, even from a dipeptide or tripeptide.. Functionally, catalyzes the removal of a penultimate prolyl residue from the N-termini of peptides. This is Probable Xaa-Pro aminopeptidase P (AMPP) from Coprinopsis cinerea (strain Okayama-7 / 130 / ATCC MYA-4618 / FGSC 9003) (Inky cap fungus).